The primary structure comprises 366 residues: Ribosomal RNA small subunit methyltransferase H 1 (366 aa).

The segment at Met-1–Arg-46 is disordered. Positions His-25–Lys-37 are enriched in basic residues. S-adenosyl-L-methionine-binding positions include Gly-97 to His-99, Asp-117, Phe-147, Asp-166, and Gln-173.

Belongs to the methyltransferase superfamily. RsmH family.

Its subcellular location is the cytoplasm. It catalyses the reaction cytidine(1402) in 16S rRNA + S-adenosyl-L-methionine = N(4)-methylcytidine(1402) in 16S rRNA + S-adenosyl-L-homocysteine + H(+). Functionally, specifically methylates the N4 position of cytidine in position 1402 (C1402) of 16S rRNA. The sequence is that of Ribosomal RNA small subunit methyltransferase H 1 from Lachnoclostridium phytofermentans (strain ATCC 700394 / DSM 18823 / ISDg) (Clostridium phytofermentans).